We begin with the raw amino-acid sequence, 417 residues long: Serine hydroxymethyltransferase (417 aa).

Residues Leu121 and 125-127 (GHL) each bind (6S)-5,6,7,8-tetrahydrofolate. Lys229 carries the post-translational modification N6-(pyridoxal phosphate)lysine. 355–357 (SPF) contributes to the (6S)-5,6,7,8-tetrahydrofolate binding site.

It belongs to the SHMT family. In terms of assembly, homodimer. Pyridoxal 5'-phosphate is required as a cofactor.

It is found in the cytoplasm. The enzyme catalyses (6R)-5,10-methylene-5,6,7,8-tetrahydrofolate + glycine + H2O = (6S)-5,6,7,8-tetrahydrofolate + L-serine. It functions in the pathway one-carbon metabolism; tetrahydrofolate interconversion. It participates in amino-acid biosynthesis; glycine biosynthesis; glycine from L-serine: step 1/1. Catalyzes the reversible interconversion of serine and glycine with tetrahydrofolate (THF) serving as the one-carbon carrier. This reaction serves as the major source of one-carbon groups required for the biosynthesis of purines, thymidylate, methionine, and other important biomolecules. Also exhibits THF-independent aldolase activity toward beta-hydroxyamino acids, producing glycine and aldehydes, via a retro-aldol mechanism. This Xanthomonas campestris pv. campestris (strain 8004) protein is Serine hydroxymethyltransferase.